We begin with the raw amino-acid sequence, 612 residues long: Sulfite reductase [NADPH] hemoprotein beta-component (612 aa).

Residues 1–26 (MDDHKPIETPDGPAVDTPGIGARRYE) are disordered. Positions 469, 475, 514, and 518 each coordinate [4Fe-4S] cluster. Residue C518 participates in siroheme binding.

It belongs to the nitrite and sulfite reductase 4Fe-4S domain family. As to quaternary structure, alpha(8)-beta(8). The alpha component is a flavoprotein, the beta component is a hemoprotein. Requires siroheme as cofactor. [4Fe-4S] cluster serves as cofactor.

The catalysed reaction is hydrogen sulfide + 3 NADP(+) + 3 H2O = sulfite + 3 NADPH + 4 H(+). The protein operates within sulfur metabolism; hydrogen sulfide biosynthesis; hydrogen sulfide from sulfite (NADPH route): step 1/1. Functionally, component of the sulfite reductase complex that catalyzes the 6-electron reduction of sulfite to sulfide. This is one of several activities required for the biosynthesis of L-cysteine from sulfate. The sequence is that of Sulfite reductase [NADPH] hemoprotein beta-component from Methylorubrum extorquens (strain PA1) (Methylobacterium extorquens).